The sequence spans 162 residues: Cyclic pyranopterin monophosphate synthase (162 aa).

Residues 75–77 and 113–114 contribute to the substrate site; these read LCH and ME. Residue Asp-128 is part of the active site.

It belongs to the MoaC family. In terms of assembly, homohexamer; trimer of dimers.

It catalyses the reaction (8S)-3',8-cyclo-7,8-dihydroguanosine 5'-triphosphate = cyclic pyranopterin phosphate + diphosphate. Its pathway is cofactor biosynthesis; molybdopterin biosynthesis. Its function is as follows. Catalyzes the conversion of (8S)-3',8-cyclo-7,8-dihydroguanosine 5'-triphosphate to cyclic pyranopterin monophosphate (cPMP). This chain is Cyclic pyranopterin monophosphate synthase, found in Burkholderia orbicola (strain MC0-3).